Reading from the N-terminus, the 754-residue chain is DNA topoisomerase 4 subunit A (754 aa).

Residues 38–501 (LPHIGDGLKP…EARALSETEL (464 aa)) enclose the Topo IIA-type catalytic domain. Tyr127 (O-(5'-phospho-DNA)-tyrosine intermediate) is an active-site residue.

It belongs to the type II topoisomerase GyrA/ParC subunit family. ParC type 1 subfamily. As to quaternary structure, heterotetramer composed of ParC and ParE.

The protein resides in the cell membrane. It catalyses the reaction ATP-dependent breakage, passage and rejoining of double-stranded DNA.. Topoisomerase IV is essential for chromosome segregation. It relaxes supercoiled DNA. Performs the decatenation events required during the replication of a circular DNA molecule. This is DNA topoisomerase 4 subunit A from Pseudomonas aeruginosa (strain ATCC 15692 / DSM 22644 / CIP 104116 / JCM 14847 / LMG 12228 / 1C / PRS 101 / PAO1).